The following is a 398-amino-acid chain: MNIHEYQAKALLGEFGVPISKGVPVLKAADAEAAAKALPGPVYVVKSQIHAGGRGKGKFKEASAGDKGGVRIAKSAAEVSEFAKQMLGATLVTIQTGPAGKQVNRLYIEDGSDIDKEFYLSLLVDRETSRVSFVVSTEGGVNIEDVAHNTPEKIVTFSVDPATGIMGHHGRTVANALKLSGDLAKQAEKLTAQLYAAFVAKDMSMLEINPLVVTKQGQLRVLDAKVSFDDNALFRHPEVLALRDETEEDAKEIEASKYDLNYVTLDGNIGCMVNGAGLAMATMDIIKLYGMAPANFLDVGGSASKEKVAAAFKIITADPNVKGILVNIFGGIMKCDVIAEGVTAAVREVGLSVPLVVRLEGTNVELGKKIILESGLNVVPADNLDDAAQKIVKAVKGG.

In terms of domain architecture, ATP-grasp spans 9 to 254 (KALLGEFGVP…ETEEDAKEIE (246 aa)). ATP is bound by residues K46, 53–55 (GRG), E109, S112, and E117. The Mg(2+) site is built by N209 and D223. Residues N274 and 331 to 333 (GIM) contribute to the substrate site.

It belongs to the succinate/malate CoA ligase beta subunit family. In terms of assembly, heterotetramer of two alpha and two beta subunits. It depends on Mg(2+) as a cofactor.

The enzyme catalyses succinate + ATP + CoA = succinyl-CoA + ADP + phosphate. It carries out the reaction GTP + succinate + CoA = succinyl-CoA + GDP + phosphate. The protein operates within carbohydrate metabolism; tricarboxylic acid cycle; succinate from succinyl-CoA (ligase route): step 1/1. In terms of biological role, succinyl-CoA synthetase functions in the citric acid cycle (TCA), coupling the hydrolysis of succinyl-CoA to the synthesis of either ATP or GTP and thus represents the only step of substrate-level phosphorylation in the TCA. The beta subunit provides nucleotide specificity of the enzyme and binds the substrate succinate, while the binding sites for coenzyme A and phosphate are found in the alpha subunit. The sequence is that of Succinate--CoA ligase [ADP-forming] subunit beta from Bradyrhizobium diazoefficiens (strain JCM 10833 / BCRC 13528 / IAM 13628 / NBRC 14792 / USDA 110).